Here is a 276-residue protein sequence, read N- to C-terminus: Eukaryotic translation initiation factor 3 subunit G-2 (276 aa).

An RRM domain is found at 196–274; the sequence is SAVRISNLSE…LILCVEWSKP (79 aa).

This sequence belongs to the eIF-3 subunit G family. Component of the eukaryotic translation initiation factor 3 (eIF-3) complex. The eIF-3 complex interacts with pix.

It is found in the cytoplasm. Its function is as follows. RNA-binding component of the eukaryotic translation initiation factor 3 (eIF-3) complex, which is involved in protein synthesis of a specialized repertoire of mRNAs and, together with other initiation factors, stimulates binding of mRNA and methionyl-tRNAi to the 40S ribosome. The eIF-3 complex specifically targets and initiates translation of a subset of mRNAs involved in cell proliferation. This subunit can bind 18S rRNA. The sequence is that of Eukaryotic translation initiation factor 3 subunit G-2 from Drosophila persimilis (Fruit fly).